The chain runs to 301 residues: Tyrosine recombinase XerD (301 aa).

A Core-binding (CB) domain is found at 7 to 90 (QFHTTILEQF…ALKVFFLFLK (84 aa)). Residues 109 to 294 (RLPSVLTPQE…AADSLIEKFL (186 aa)) form the Tyr recombinase domain. Active-site residues include arginine 153, lysine 175, histidine 246, arginine 249, and histidine 272. Tyrosine 281 functions as the O-(3'-phospho-DNA)-tyrosine intermediate in the catalytic mechanism.

This sequence belongs to the 'phage' integrase family. XerD subfamily. Forms a cyclic heterotetrameric complex composed of two molecules of XerC and two molecules of XerD.

The protein localises to the cytoplasm. Functionally, site-specific tyrosine recombinase, which acts by catalyzing the cutting and rejoining of the recombining DNA molecules. The XerC-XerD complex is essential to convert dimers of the bacterial chromosome into monomers to permit their segregation at cell division. It also contributes to the segregational stability of plasmids. The protein is Tyrosine recombinase XerD of Chlamydia pneumoniae (Chlamydophila pneumoniae).